Consider the following 263-residue polypeptide: Mediator of RNA polymerase II transcription subunit 6 (263 aa).

A disordered region spans residues 159 to 205 (NSIHGSSSKPSQSSAVSKPSSTNTGTNATTTPITLTTPSGATVPSTV). A compositionally biased stretch (low complexity) spans 164–200 (SSSKPSQSSAVSKPSSTNTGTNATTTPITLTTPSGAT).

The protein belongs to the Mediator complex subunit 6 family. Component of the Mediator complex.

It localises to the nucleus. Functionally, component of the Mediator complex, a coactivator involved in the regulated transcription of nearly all RNA polymerase II-dependent genes. Mediator functions as a bridge to convey information from gene-specific regulatory proteins to the basal RNA polymerase II transcription machinery. Mediator is recruited to promoters by direct interactions with regulatory proteins and serves as a scaffold for the assembly of a functional preinitiation complex with RNA polymerase II and the general transcription factors. This chain is Mediator of RNA polymerase II transcription subunit 6 (MED6), found in Candida albicans (strain SC5314 / ATCC MYA-2876) (Yeast).